Consider the following 53-residue polypeptide: uncharacterized protein (53 aa).

An N-terminal signal peptide occupies residues 1–23; that stretch reads MSILLKILFKLLLLILSITFVIT.

This is an uncharacterized protein from Acheta domesticus (House cricket).